Reading from the N-terminus, the 2713-residue chain is Histone-lysine N-methyltransferase 2B (2713 aa).

The span at 1 to 11 (MAAAAGGGSCP) shows a compositional bias: gly residues. 3 disordered regions span residues 1–65 (MAAA…GEDT), 82–524 (RLWA…PTVV), and 542–783 (VSAR…ARVA). A2 is subject to N-acetylalanine. Positions 12–24 (GPGSARGRFPGRP) are enriched in low complexity. The Menin-binding motif (MBM) signature appears at 17-36 (RGRFPGRPRGSGGGGGRGGR). Gly residues-rich tracts occupy residues 25–38 (RGSG…GRGN) and 49–60 (RGGGAAGPGGAE). The a.T hook 1 DNA-binding region spans 37 to 44 (GNGAERVR). A compositionally biased stretch (acidic residues) spans 109 to 123 (PEEESSDGESEEEEF). Positions 110 to 117 (EEESSDGE) form a DNA-binding region, a.T hook 2. 3 positions are modified to phosphoserine: S113, S114, and S118. Basic residues predominate over residues 144-158 (QRGRAPRGRGRKHKT). A compositionally biased stretch (basic and acidic residues) spans 340–360 (PQRKDGDEPERGSCRKKQEQK). Positions 357–365 (QEQKLEEEE) form a DNA-binding region, a.T hook 3. Residues 361-393 (LEEEEEEEEKEGEEKEEKDDNEDNNKQEEEEET) show a composition bias toward acidic residues. Residues 394–412 (ERAVAEEEAMLAKEKEEAK) are compositionally biased toward basic and acidic residues. Over residues 414-460 (PSPPLTPPVPSPPPPLPPPSTSPPPPASPLPPPVSPPPPLSPPPYPA) the composition is skewed to pro residues. Low complexity predominate over residues 501-517 (GTLSPTPNPSTTTGSPL). Positions 555 to 566 (RFMDEDPPKPPK) are enriched in basic and acidic residues. The span at 577 to 605 (ATSPPAPQEPVPVSSPPRVPTPPSTPVPL) shows a compositional bias: pro residues. The segment covering 606 to 617 (PEKRRSILREPT) has biased composition (basic and acidic residues). Residues 627–645 (LPPPPPAPPPAPSPPPAPA) are compositionally biased toward pro residues. Composition is skewed to low complexity over residues 646–657 (TPSRRPLLLRAP), 715–728 (VPVV…EVPP), and 738–756 (QQLQ…LLPQ). The span at 757-774 (ALPPQQPQAQPPPSPQHT) shows a compositional bias: pro residues. K810 is covalently cross-linked (Glycyl lysine isopeptide (Lys-Gly) (interchain with G-Cter in SUMO2)). 3 positions are modified to phosphoserine: S826, S849, and S866. 2 disordered regions span residues 831–872 (TEEA…QGPR) and 899–964 (SALP…HHGK). Basic and acidic residues predominate over residues 841–862 (TPDRGCVRSEDESMEAKRDRAS). Low complexity predominate over residues 912 to 922 (EDTSSASETES). S941 carries the phosphoserine modification. Residues 953–964 (TPRRSLPSHHGK) are compositionally biased toward basic residues. A CXXC-type zinc finger spans residues 964 to 1011 (KKMRMARCGHCRGCLRVQDCGSCVNCLDKPKFGGPNTKKQCCVYRKCD). Residues C971, C974, C977, C983, C986, C989, C1005, and C1010 each contribute to the Zn(2+) site. 2 disordered regions span residues 1032–1076 (LLPW…DSLL) and 1088–1138 (QRPS…LQPV). A phosphoserine mark is found at S1037, S1040, S1098, and S1101. K1142 participates in a covalent cross-link: Glycyl lysine isopeptide (Lys-Gly) (interchain with G-Cter in SUMO2). 3 consecutive PHD-type zinc fingers follow at residues 1207 to 1258 (PMVC…CKFC), 1255 to 1309 (CKFC…CVRC), and 1341 to 1402 (GNYC…CAGA). The region spanning 1410-1510 (ALSGALQGGL…GLLLKLLESA (101 aa)) is the Bromo domain. Residues 1550–1572 (RQQESETPESGQPPGDPSAAFQS) form a disordered region. The segment at 1584-1624 (PRQCALCLKYGDADSKEAGRLLYIGQNEWTHVNCAIWSAEV) adopts a C2HC pre-PHD-type zinc-finger fold. The PHD-type 4 zinc-finger motif lies at 1645–1692 (MRCELCLKPGATVGCCLSSCLSNFHFMCARASYCIFQDDKKVFCQKHT). Residues 1733–1789 (VINVLIGSIRINSLGTLSDLSDCEGRLFPIGYQCSRLYWSTVDARRRCWYRCRILEY) enclose the FYR N-terminal domain. Polar residues predominate over residues 1808 to 1821 (QTIVHSPTPSSDTD). Disordered regions lie at residues 1808 to 1973 (QTIV…GPDF), 2056 to 2104 (QLDG…PPED), 2116 to 2160 (NLGG…RTFA), 2279 to 2356 (VSTF…RCPL), and 2382 to 2408 (YSAG…PKRV). 2 stretches are compositionally biased toward low complexity: residues 1872–1890 (PLGG…PSSL) and 1923–1933 (RRTSSPLRTSP). Residues S1926 and S1932 each carry the phosphoserine modification. Over residues 1939–1950 (LSTSVTALTPTS) the composition is skewed to polar residues. Positions 2058 to 2068 (DGVDDGTDSEA) are enriched in acidic residues. Residues T2064 and T2079 each carry the phosphothreonine modification. Positions 2084-2093 (PGVGRGGVLG) are enriched in gly residues. Positions 2140-2153 (NGSQPPQSLSTSPA) are enriched in polar residues. S2286 and S2346 each carry phosphoserine. Positions 2409-2490 (GPHLRFEISS…QRCQHYKFRY (82 aa)) constitute an FYR C-terminal domain. The short motif at 2506–2511 (GAARAE) is the WDR5 interaction motif (WIN) element. The region spanning 2573 to 2689 (EAVGVYRSAI…RGEELTYDYK (117 aa)) is the SET domain. S-adenosyl-L-methionine is bound by residues H2583, R2585, Y2627, and 2650-2651 (NH). Zn(2+) contacts are provided by C2653 and C2701. One can recognise a Post-SET domain in the interval 2697 to 2713 (NKLPCNCGAKRCRRFLN). Residue N2702 participates in S-adenosyl-L-methionine binding. Positions 2703 and 2708 each coordinate Zn(2+).

The protein belongs to the class V-like SAM-binding methyltransferase superfamily. Histone-lysine methyltransferase family. TRX/MLL subfamily. As to quaternary structure, component of the menin-associated histone methyltransferase complex, at least composed of KMT2B/MLL4, ASH2L, RBBP5, WDR5, DPY30, MEN1; the complex interacts with POLR2A and POLR2B via MEN1. Interacts with NFE2. Interacts with KDM6B. Interacts (via WIN motif) with WDR5. Interacts (via MBM motif) with MEN1.

The protein localises to the nucleus. The catalysed reaction is L-lysyl(4)-[histone H3] + S-adenosyl-L-methionine = N(6)-methyl-L-lysyl(4)-[histone H3] + S-adenosyl-L-homocysteine + H(+). It catalyses the reaction N(6)-methyl-L-lysyl(4)-[histone H3] + S-adenosyl-L-methionine = N(6),N(6)-dimethyl-L-lysyl(4)-[histone H3] + S-adenosyl-L-homocysteine + H(+). Its function is as follows. Histone methyltransferase that catalyzes methyl group transfer from S-adenosyl-L-methionine to the epsilon-amino group of 'Lys-4' of histone H3 (H3K4) via a non-processive mechanism. Part of chromatin remodeling machinery predominantly forms H3K4me1 and H3K4me2 methylation marks at active chromatin sites where transcription and DNA repair take place. Likely plays a redundant role with KMT2C in enriching H3K4me1 marks on primed and active enhancer elements. Plays a central role in beta-globin locus transcription regulation by being recruited by NFE2. Plays an important role in controlling bulk H3K4me during oocyte growth and preimplantation development. Required during the transcriptionally active period of oocyte growth for the establishment and/or maintenance of bulk H3K4 trimethylation (H3K4me3), global transcriptional silencing that preceeds resumption of meiosis, oocyte survival and normal zygotic genome activation. This Mus musculus (Mouse) protein is Histone-lysine N-methyltransferase 2B (Kmt2b).